We begin with the raw amino-acid sequence, 81 residues long: Defensin-like protein 43 (81 aa).

The N-terminal stretch at 1–27 is a signal peptide; that stretch reads MGITKTSVTFLFLLILAAFVSNYNVLA. Disulfide bonds link C40–C79, C44–C67, C53–C77, and C57–C78.

This sequence belongs to the DEFL family.

The protein resides in the secreted. The chain is Defensin-like protein 43 from Arabidopsis thaliana (Mouse-ear cress).